Consider the following 258-residue polypeptide: 1-(5-phosphoribosyl)-5-[(5-phosphoribosylamino)methylideneamino] imidazole-4-carboxamide isomerase (258 aa).

Catalysis depends on Asp9, which acts as the Proton acceptor. Asp131 serves as the catalytic Proton donor.

It belongs to the HisA/HisF family.

The protein localises to the cytoplasm. The catalysed reaction is 1-(5-phospho-beta-D-ribosyl)-5-[(5-phospho-beta-D-ribosylamino)methylideneamino]imidazole-4-carboxamide = 5-[(5-phospho-1-deoxy-D-ribulos-1-ylimino)methylamino]-1-(5-phospho-beta-D-ribosyl)imidazole-4-carboxamide. Its pathway is amino-acid biosynthesis; L-histidine biosynthesis; L-histidine from 5-phospho-alpha-D-ribose 1-diphosphate: step 4/9. The chain is 1-(5-phosphoribosyl)-5-[(5-phosphoribosylamino)methylideneamino] imidazole-4-carboxamide isomerase from Salinibacter ruber (strain DSM 13855 / M31).